A 619-amino-acid chain; its full sequence is Teichoic acid poly(ribitol-phosphate) polymerase (619 aa).

This sequence belongs to the CDP-glycerol glycerophosphotransferase family.

The protein resides in the cell membrane. It catalyses the reaction 4-O-[1-D-ribitylphospho-(2R)-1-glycerylphospho]-N-acetyl-beta-D-mannosaminyl-(1-&gt;4)-N-acetyl-alpha-D-glucosaminyl di-trans,octa-cis-undecaprenyl diphosphate + n CDP-L-ribitol = 4-O-[(D-ribitylphospho)(n)-D-ribitylphospho-(2R)-glycerylphospho]-N-acetyl-beta-D-mannosaminyl-(1-&gt;4)-N-acetyl-alpha-D-glucosaminyl di-trans,octa-cis-undecaprenyl diphosphate + n CMP + n H(+). Its pathway is cell wall biogenesis; poly(ribitol phosphate) teichoic acid biosynthesis. Responsible for the polymerization of the main chain of the major teichoic acid by sequential transfer of ribitol phosphate units from CDP-ribitol to the glycerol phosphate attached to the disaccharide linkage unit. Synthesizes polymers of up to 40 ribitol phosphate units in length. This is Teichoic acid poly(ribitol-phosphate) polymerase (tarL) from Bacillus spizizenii (strain ATCC 23059 / NRRL B-14472 / W23) (Bacillus subtilis subsp. spizizenii).